The primary structure comprises 577 residues: Efflux pump notK' (577 aa).

Asparagine 62 and asparagine 84 each carry an N-linked (GlcNAc...) asparagine glycan. 5 consecutive transmembrane segments (helical) span residues alanine 104–leucine 124, leucine 151–isoleucine 171, alanine 189–valine 209, asparagine 241–tyrosine 261, and glycine 265–valine 285. Asparagine 320 carries an N-linked (GlcNAc...) asparagine glycan. Helical transmembrane passes span phenylalanine 328 to tyrosine 348, valine 373 to valine 393, glycine 413 to alanine 433, threonine 434 to tryptophan 454, and isoleucine 476 to valine 496. Residues methionine 555–proline 566 are compositionally biased toward low complexity. Positions methionine 555–tyrosine 577 are disordered. N-linked (GlcNAc...) asparagine glycosylation is present at asparagine 558.

It belongs to the nucleobase:cation symporter-2 (NCS2) (TC 2.A.40) family. Azg-like subfamily.

The protein localises to the cell membrane. In terms of biological role, efflux pump; part of the gene cluster that mediates the biosynthesis of notoamide, a fungal indole alkaloid that belongs to a family of natural products containing a characteristic bicyclo[2.2.2]diazaoctane core. In Aspergillus versicolor, this protein is Efflux pump notK'.